A 569-amino-acid chain; its full sequence is Ferredoxin--nitrite reductase, chloroplastic (569 aa).

A chloroplast-targeting transit peptide spans 1 to 4 (IPGR). The interval 1 to 28 (IPGRTGRARAAVSVPPPAGEQVPTERLE) is disordered. [4Fe-4S] cluster is bound by residues cysteine 447, cysteine 453, cysteine 488, and cysteine 492. Cysteine 492 is a siroheme binding site.

It belongs to the nitrite and sulfite reductase 4Fe-4S domain family. In terms of assembly, monomer. Siroheme is required as a cofactor. Requires [4Fe-4S] cluster as cofactor.

The protein localises to the plastid. The protein resides in the chloroplast. It catalyses the reaction 6 oxidized [2Fe-2S]-[ferredoxin] + NH4(+) + 2 H2O = nitrite + 6 reduced [2Fe-2S]-[ferredoxin] + 8 H(+). The protein operates within nitrogen metabolism; nitrate reduction (assimilation). The protein is Ferredoxin--nitrite reductase, chloroplastic (NIR) of Zea mays (Maize).